Here is a 378-residue protein sequence, read N- to C-terminus: Succinyl-diaminopimelate desuccinylase (378 aa).

H68 is a Zn(2+) binding site. D70 is an active-site residue. D102 contributes to the Zn(2+) binding site. Catalysis depends on E136, which acts as the Proton acceptor. Residues E137, E165, and H351 each coordinate Zn(2+).

It belongs to the peptidase M20A family. DapE subfamily. As to quaternary structure, homodimer. The cofactor is Zn(2+). Requires Co(2+) as cofactor.

It carries out the reaction N-succinyl-(2S,6S)-2,6-diaminopimelate + H2O = (2S,6S)-2,6-diaminopimelate + succinate. Its pathway is amino-acid biosynthesis; L-lysine biosynthesis via DAP pathway; LL-2,6-diaminopimelate from (S)-tetrahydrodipicolinate (succinylase route): step 3/3. Functionally, catalyzes the hydrolysis of N-succinyl-L,L-diaminopimelic acid (SDAP), forming succinate and LL-2,6-diaminopimelate (DAP), an intermediate involved in the bacterial biosynthesis of lysine and meso-diaminopimelic acid, an essential component of bacterial cell walls. This Pseudomonas syringae pv. syringae protein is Succinyl-diaminopimelate desuccinylase.